Here is a 293-residue protein sequence, read N- to C-terminus: 4-hydroxy-tetrahydrodipicolinate synthase (293 aa).

Residue Thr-45 coordinates pyruvate. The active-site Proton donor/acceptor is Tyr-133. The active-site Schiff-base intermediate with substrate is the Lys-162. Ile-204 contributes to the pyruvate binding site.

The protein belongs to the DapA family. As to quaternary structure, homotetramer; dimer of dimers.

It is found in the cytoplasm. It catalyses the reaction L-aspartate 4-semialdehyde + pyruvate = (2S,4S)-4-hydroxy-2,3,4,5-tetrahydrodipicolinate + H2O + H(+). It functions in the pathway amino-acid biosynthesis; L-lysine biosynthesis via DAP pathway; (S)-tetrahydrodipicolinate from L-aspartate: step 3/4. Catalyzes the condensation of (S)-aspartate-beta-semialdehyde [(S)-ASA] and pyruvate to 4-hydroxy-tetrahydrodipicolinate (HTPA). This chain is 4-hydroxy-tetrahydrodipicolinate synthase, found in Brucella suis biovar 1 (strain 1330).